Reading from the N-terminus, the 252-residue chain is Ubiquinone/menaquinone biosynthesis C-methyltransferase UbiE (252 aa).

Residues T75, D96, and 123-124 each bind S-adenosyl-L-methionine; that span reads NA.

It belongs to the class I-like SAM-binding methyltransferase superfamily. MenG/UbiE family.

The catalysed reaction is a 2-demethylmenaquinol + S-adenosyl-L-methionine = a menaquinol + S-adenosyl-L-homocysteine + H(+). The enzyme catalyses a 2-methoxy-6-(all-trans-polyprenyl)benzene-1,4-diol + S-adenosyl-L-methionine = a 5-methoxy-2-methyl-3-(all-trans-polyprenyl)benzene-1,4-diol + S-adenosyl-L-homocysteine + H(+). It functions in the pathway quinol/quinone metabolism; menaquinone biosynthesis; menaquinol from 1,4-dihydroxy-2-naphthoate: step 2/2. The protein operates within cofactor biosynthesis; ubiquinone biosynthesis. Methyltransferase required for the conversion of demethylmenaquinol (DMKH2) to menaquinol (MKH2) and the conversion of 2-polyprenyl-6-methoxy-1,4-benzoquinol (DDMQH2) to 2-polyprenyl-3-methyl-6-methoxy-1,4-benzoquinol (DMQH2). This Methylobacterium nodulans (strain LMG 21967 / CNCM I-2342 / ORS 2060) protein is Ubiquinone/menaquinone biosynthesis C-methyltransferase UbiE.